A 237-amino-acid chain; its full sequence is NADPH-dependent FMN reductase ArsH (237 aa).

Residues 39-46 (SNRECSYS) and 102-107 (SPERHG) each bind FMN.

This sequence belongs to the ArsH family. As to quaternary structure, homotetramer. FMN is required as a cofactor.

Has NADPH-dependent FMN reductase activity and high NADPH-dependent ferric reductase activity with highest activity for Fe(3+) as substrate. No activity with NADH, iron trichloride, Cu(2+) or Ag(+). May be involved in cytosolic ferric iron assimilation as an NADPH-dependent ferric reductase in vivo. This chain is NADPH-dependent FMN reductase ArsH, found in Acidithiobacillus ferrooxidans (strain ATCC 23270 / DSM 14882 / CIP 104768 / NCIMB 8455) (Ferrobacillus ferrooxidans (strain ATCC 23270)).